We begin with the raw amino-acid sequence, 353 residues long: UPF0283 membrane protein YcjF (353 aa).

Transmembrane regions (helical) follow at residues 70-90 (MVMGGLALFGASVVGQGVQWT), 100-120 (VALGGCAAGALIIGAGVGSVV), and 213-233 (ESTLMIAVSPLALVDMAFIAW).

Belongs to the UPF0283 family.

It is found in the cell inner membrane. The protein is UPF0283 membrane protein YcjF of Escherichia coli O45:K1 (strain S88 / ExPEC).